A 410-amino-acid polypeptide reads, in one-letter code: MSESVIQGSNPDRVLSPTSSKSVTQTVNGSHQFVIQGYSLAKGMGIGKHIASDNFSVGGYQWGIFFYPDGKNPEDNSSYVSVFIALASEGTEVRALFELALVDQSGKGKHKVHSHFERSLDGGPYTLKYRGSMWGYKRFFRRSILETSDYLKDDCLIINCTVGVVVSEILCPQLHSVHVPDSELGSHFGVLLDSMEGSDITFNIAGEKFLAHKLVLAARSPFFKSKFFSEFEANNTEVTINDLEPKVFKALLQFMYKDSLPEDVEPATAHTFERLKLSEIYETLIVKVLAAADKYDLIRLRLLCESHICKGVSVKSVAKILALADRYNAKELKGVCLKFTAENLAAVLETDAYQQMKDECVTLQSELLKAVAGHEEGSNSTGGAKSQSVWAQLSDGGGDTTSRHVRQRTT.

The interval 1 to 24 is disordered; sequence MSESVIQGSNPDRVLSPTSSKSVT. Residues 28–162 enclose the MATH domain; the sequence is NGSHQFVIQG…DDCLIINCTV (135 aa). One can recognise a BTB domain in the interval 198 to 264; it reads SDITFNIAGE…MYKDSLPEDV (67 aa).

The protein belongs to the Tdpoz family. As to quaternary structure, heterodimer with BPM1 and BPM3. Interacts with RAP2-4. Binds to MYB56 at the promoter of FLOWERING LOCUS T (FT). As to expression, ubiquitous.

Its subcellular location is the nucleus. The protein resides in the cytoplasm. The protein operates within protein modification; protein ubiquitination. In terms of biological role, may act as a substrate-specific adapter of an E3 ubiquitin-protein ligase complex (CUL3-RBX1-BTB) which mediates the ubiquitination and subsequent proteasomal degradation of target proteins. The protein is BTB/POZ and MATH domain-containing protein 5 (BPM5) of Arabidopsis thaliana (Mouse-ear cress).